The following is a 217-amino-acid chain: Large ribosomal subunit protein uL1 (217 aa).

Lys-122 bears the N6,N6-dimethyllysine; alternate mark. Lys-122 is subject to N6-methyllysine; alternate.

Belongs to the universal ribosomal protein uL1 family.

The polypeptide is Large ribosomal subunit protein uL1 (rpl10a) (Dictyostelium discoideum (Social amoeba)).